Consider the following 354-residue polypeptide: tRNA N6-adenosine threonylcarbamoyltransferase (354 aa).

Histidine 115 and histidine 119 together coordinate Fe cation. Residues 138-142, aspartate 171, glycine 184, and asparagine 276 contribute to the substrate site; that span reads LVSGG. Residue aspartate 304 coordinates Fe cation.

Belongs to the KAE1 / TsaD family. Requires Fe(2+) as cofactor.

The protein resides in the cytoplasm. The catalysed reaction is L-threonylcarbamoyladenylate + adenosine(37) in tRNA = N(6)-L-threonylcarbamoyladenosine(37) in tRNA + AMP + H(+). In terms of biological role, required for the formation of a threonylcarbamoyl group on adenosine at position 37 (t(6)A37) in tRNAs that read codons beginning with adenine. Is involved in the transfer of the threonylcarbamoyl moiety of threonylcarbamoyl-AMP (TC-AMP) to the N6 group of A37, together with TsaE and TsaB. TsaD likely plays a direct catalytic role in this reaction. This is tRNA N6-adenosine threonylcarbamoyltransferase from Xanthomonas oryzae pv. oryzae (strain MAFF 311018).